Here is a 91-residue protein sequence, read N- to C-terminus: ATP synthase subunit c 1 (91 aa).

The next 2 helical transmembrane spans lie at 4 to 24 (FTMC…GTAI) and 53 to 73 (IGLA…LIIL).

Belongs to the ATPase C chain family. F-type ATPases have 2 components, F(1) - the catalytic core - and F(0) - the membrane proton channel. F(1) has five subunits: alpha(3), beta(3), gamma(1), delta(1), epsilon(1). F(0) has three main subunits: a(1), b(2) and c(10-14). The alpha and beta chains form an alternating ring which encloses part of the gamma chain. F(1) is attached to F(0) by a central stalk formed by the gamma and epsilon chains, while a peripheral stalk is formed by the delta and b chains.

Its subcellular location is the cell inner membrane. Its function is as follows. F(1)F(0) ATP synthase produces ATP from ADP in the presence of a proton or sodium gradient. F-type ATPases consist of two structural domains, F(1) containing the extramembraneous catalytic core and F(0) containing the membrane proton channel, linked together by a central stalk and a peripheral stalk. During catalysis, ATP synthesis in the catalytic domain of F(1) is coupled via a rotary mechanism of the central stalk subunits to proton translocation. In terms of biological role, key component of the F(0) channel; it plays a direct role in translocation across the membrane. A homomeric c-ring of between 10-14 subunits forms the central stalk rotor element with the F(1) delta and epsilon subunits. The protein is ATP synthase subunit c 1 of Pelobacter propionicus (strain DSM 2379 / NBRC 103807 / OttBd1).